A 166-amino-acid chain; its full sequence is MSQRPNPSALIWLLLSALVIGLDQWSKAWVLSSLPEYTSVPVIDGFWNWYRTYNTGAAFSFLSDAGGWQLWFFTALAMGISGLLAFWLSRTARGHWRSALPYALVIGGAIGNVIDRLMHGHVVDFIQWYIGSHTWPSFNIADSAIVGGAIGIAVFGLFDKAGKQAS.

The next 3 helical transmembrane spans lie at 10–30 (LIWL…KAWV), 68–88 (WQLW…AFWL), and 94–114 (GHWR…GNVI). Residues aspartate 124 and aspartate 142 contribute to the active site. A helical membrane pass occupies residues 138–158 (FNIADSAIVGGAIGIAVFGLF).

Belongs to the peptidase A8 family.

Its subcellular location is the cell inner membrane. It catalyses the reaction Release of signal peptides from bacterial membrane prolipoproteins. Hydrolyzes -Xaa-Yaa-Zaa-|-(S,diacylglyceryl)Cys-, in which Xaa is hydrophobic (preferably Leu), and Yaa (Ala or Ser) and Zaa (Gly or Ala) have small, neutral side chains.. It functions in the pathway protein modification; lipoprotein biosynthesis (signal peptide cleavage). This protein specifically catalyzes the removal of signal peptides from prolipoproteins. The sequence is that of Lipoprotein signal peptidase from Xanthomonas oryzae pv. oryzae (strain MAFF 311018).